The primary structure comprises 428 residues: Dihydroorotase (428 aa).

Residues H61 and H63 each contribute to the Zn(2+) site. Residues 63-65 (HLR) and N95 contribute to the substrate site. D153, H180, and H233 together coordinate Zn(2+). Position 279 (N279) interacts with substrate. Residue D306 coordinates Zn(2+). Residue D306 is part of the active site. Residues H310 and 324-325 (FG) contribute to the substrate site.

Belongs to the metallo-dependent hydrolases superfamily. DHOase family. Class I DHOase subfamily. It depends on Zn(2+) as a cofactor.

It carries out the reaction (S)-dihydroorotate + H2O = N-carbamoyl-L-aspartate + H(+). It participates in pyrimidine metabolism; UMP biosynthesis via de novo pathway; (S)-dihydroorotate from bicarbonate: step 3/3. Catalyzes the reversible cyclization of carbamoyl aspartate to dihydroorotate. The chain is Dihydroorotase from Geobacillus thermodenitrificans (strain NG80-2).